The chain runs to 364 residues: Protein Wnt-6 (364 aa).

Positions 1–23 (MLPPVPSRLGLLLLLLCPAHVDG) are cleaved as a signal peptide. 11 disulfide bridges follow: Cys75–Cys86, Cys123–Cys131, Cys133–Cys171, Cys221–Cys235, Cys223–Cys230, Cys293–Cys324, Cys309–Cys319, Cys323–Cys363, Cys339–Cys354, Cys341–Cys351, and Cys346–Cys347. The N-linked (GlcNAc...) asparagine glycan is linked to Asn85. Residues 140–162 (APPRPSGLLGTPGPPGPTGSPDA) are disordered. Ser227 carries O-palmitoleoyl serine; by PORCN lipidation. Residue Asn310 is glycosylated (N-linked (GlcNAc...) asparagine).

It belongs to the Wnt family. Interacts with PORCN. Post-translationally, palmitoleoylation is required for efficient binding to frizzled receptors. Depalmitoleoylation leads to Wnt signaling pathway inhibition. In terms of tissue distribution, detected in ileum, colon and stomach (at protein level).

It localises to the secreted. The protein resides in the extracellular space. The protein localises to the extracellular matrix. Ligand for members of the frizzled family of seven transmembrane receptors. Probable developmental protein. May be a signaling molecule which affects the development of discrete regions of tissues. Is likely to signal over only few cell diameters. This chain is Protein Wnt-6 (Wnt6), found in Mus musculus (Mouse).